The following is a 492-amino-acid chain: N-succinylglutamate 5-semialdehyde dehydrogenase (492 aa).

Residue 220-225 (GSASTG) coordinates NAD(+). Catalysis depends on residues Glu-243 and Cys-277.

Belongs to the aldehyde dehydrogenase family. AstD subfamily.

It catalyses the reaction N-succinyl-L-glutamate 5-semialdehyde + NAD(+) + H2O = N-succinyl-L-glutamate + NADH + 2 H(+). Its pathway is amino-acid degradation; L-arginine degradation via AST pathway; L-glutamate and succinate from L-arginine: step 4/5. In terms of biological role, catalyzes the NAD-dependent reduction of succinylglutamate semialdehyde into succinylglutamate. The protein is N-succinylglutamate 5-semialdehyde dehydrogenase of Salmonella paratyphi B (strain ATCC BAA-1250 / SPB7).